Consider the following 85-residue polypeptide: Large ribosomal subunit protein bL27 (85 aa).

A disordered region spans residues 1 to 24 (MAHKKGVGSSRNGRDSDGQRLGCK).

It belongs to the bacterial ribosomal protein bL27 family.

The protein is Large ribosomal subunit protein bL27 of Geotalea daltonii (strain DSM 22248 / JCM 15807 / FRC-32) (Geobacter daltonii).